A 265-amino-acid chain; its full sequence is Secreted RxLR effector protein 146 (265 aa).

Positions 1 to 25 are cleaved as a signal peptide; that stretch reads MRYYTQVVAASLVATLAVVDSIVFA. A RxLR-dEER motif is present at residues 32-50; sequence RFLRQDGATVTRGGKGEER. Residues asparagine 71 and asparagine 148 are each glycosylated (N-linked (GlcNAc...) asparagine).

The protein belongs to the RxLR effector family.

It localises to the secreted. The protein resides in the host nucleus. The protein localises to the host cytoplasm. Functionally, secreted effector that completely suppresses the host cell death induced by cell death-inducing proteins. The protein is Secreted RxLR effector protein 146 of Plasmopara viticola (Downy mildew of grapevine).